A 469-amino-acid polypeptide reads, in one-letter code: Bifunctional protein GlmU (469 aa).

The segment at 1 to 236 is pyrophosphorylase; that stretch reads MLNIKLNIVI…ISEINGINDC (236 aa). UDP-N-acetyl-alpha-D-glucosamine is bound by residues 11–14, lysine 25, glutamine 83, 88–89, 110–112, glycine 147, glutamate 161, asparagine 176, and asparagine 234; these read LAAG, GT, and YGD. Residue aspartate 112 participates in Mg(2+) binding. Position 234 (asparagine 234) interacts with Mg(2+). A linker region spans residues 237-257; sequence AQLANLERLYQKEQAESLLRI. Residues 258–469 form an N-acetyltransferase region; sequence GVIIADPNRF…KKKIRYNIIY (212 aa). Residues arginine 340 and lysine 358 each coordinate UDP-N-acetyl-alpha-D-glucosamine. Histidine 370 (proton acceptor) is an active-site residue. UDP-N-acetyl-alpha-D-glucosamine-binding residues include tyrosine 373 and asparagine 384. Residues alanine 387, 393–394, serine 412, alanine 430, and arginine 447 contribute to the acetyl-CoA site; that span reads NY.

The protein in the N-terminal section; belongs to the N-acetylglucosamine-1-phosphate uridyltransferase family. This sequence in the C-terminal section; belongs to the transferase hexapeptide repeat family. In terms of assembly, homotrimer. It depends on Mg(2+) as a cofactor.

It localises to the cytoplasm. It catalyses the reaction alpha-D-glucosamine 1-phosphate + acetyl-CoA = N-acetyl-alpha-D-glucosamine 1-phosphate + CoA + H(+). The enzyme catalyses N-acetyl-alpha-D-glucosamine 1-phosphate + UTP + H(+) = UDP-N-acetyl-alpha-D-glucosamine + diphosphate. It participates in nucleotide-sugar biosynthesis; UDP-N-acetyl-alpha-D-glucosamine biosynthesis; N-acetyl-alpha-D-glucosamine 1-phosphate from alpha-D-glucosamine 6-phosphate (route II): step 2/2. The protein operates within nucleotide-sugar biosynthesis; UDP-N-acetyl-alpha-D-glucosamine biosynthesis; UDP-N-acetyl-alpha-D-glucosamine from N-acetyl-alpha-D-glucosamine 1-phosphate: step 1/1. It functions in the pathway bacterial outer membrane biogenesis; LPS lipid A biosynthesis. Catalyzes the last two sequential reactions in the de novo biosynthetic pathway for UDP-N-acetylglucosamine (UDP-GlcNAc). The C-terminal domain catalyzes the transfer of acetyl group from acetyl coenzyme A to glucosamine-1-phosphate (GlcN-1-P) to produce N-acetylglucosamine-1-phosphate (GlcNAc-1-P), which is converted into UDP-GlcNAc by the transfer of uridine 5-monophosphate (from uridine 5-triphosphate), a reaction catalyzed by the N-terminal domain. The protein is Bifunctional protein GlmU of Baumannia cicadellinicola subsp. Homalodisca coagulata.